Consider the following 184-residue polypeptide: Cytidylate kinase (184 aa).

8-16 (GQPGSGKTT) contributes to the ATP binding site.

This sequence belongs to the cytidylate kinase family. Type 2 subfamily.

The protein resides in the cytoplasm. The enzyme catalyses CMP + ATP = CDP + ADP. It carries out the reaction dCMP + ATP = dCDP + ADP. In Pyrobaculum islandicum (strain DSM 4184 / JCM 9189 / GEO3), this protein is Cytidylate kinase.